A 216-amino-acid chain; its full sequence is Thiamine-phosphate synthase (216 aa).

Residues 40–44 (QLRIK) and N72 contribute to the 4-amino-2-methyl-5-(diphosphooxymethyl)pyrimidine site. Positions 73 and 92 each coordinate Mg(2+). S111 lines the 4-amino-2-methyl-5-(diphosphooxymethyl)pyrimidine pocket. 2-[(2R,5Z)-2-carboxy-4-methylthiazol-5(2H)-ylidene]ethyl phosphate is bound at residue 137–139 (TTT). Residue K140 coordinates 4-amino-2-methyl-5-(diphosphooxymethyl)pyrimidine. 2-[(2R,5Z)-2-carboxy-4-methylthiazol-5(2H)-ylidene]ethyl phosphate is bound by residues G169 and 189-190 (VS).

This sequence belongs to the thiamine-phosphate synthase family. The cofactor is Mg(2+).

It carries out the reaction 2-[(2R,5Z)-2-carboxy-4-methylthiazol-5(2H)-ylidene]ethyl phosphate + 4-amino-2-methyl-5-(diphosphooxymethyl)pyrimidine + 2 H(+) = thiamine phosphate + CO2 + diphosphate. It catalyses the reaction 2-(2-carboxy-4-methylthiazol-5-yl)ethyl phosphate + 4-amino-2-methyl-5-(diphosphooxymethyl)pyrimidine + 2 H(+) = thiamine phosphate + CO2 + diphosphate. The catalysed reaction is 4-methyl-5-(2-phosphooxyethyl)-thiazole + 4-amino-2-methyl-5-(diphosphooxymethyl)pyrimidine + H(+) = thiamine phosphate + diphosphate. It participates in cofactor biosynthesis; thiamine diphosphate biosynthesis; thiamine phosphate from 4-amino-2-methyl-5-diphosphomethylpyrimidine and 4-methyl-5-(2-phosphoethyl)-thiazole: step 1/1. In terms of biological role, condenses 4-methyl-5-(beta-hydroxyethyl)thiazole monophosphate (THZ-P) and 2-methyl-4-amino-5-hydroxymethyl pyrimidine pyrophosphate (HMP-PP) to form thiamine monophosphate (TMP). This Photorhabdus laumondii subsp. laumondii (strain DSM 15139 / CIP 105565 / TT01) (Photorhabdus luminescens subsp. laumondii) protein is Thiamine-phosphate synthase.